We begin with the raw amino-acid sequence, 277 residues long: Phosphonates import ATP-binding protein PhnC 2 (277 aa).

The region spanning 5 to 253 (IHVQGLNKTF…FLNDLYGADA (249 aa)) is the ABC transporter domain. Residue 37-44 (GASGSGKS) participates in ATP binding.

It belongs to the ABC transporter superfamily. Phosphonates importer (TC 3.A.1.9.1) family. The complex is composed of two ATP-binding proteins (PhnC), two transmembrane proteins (PhnE) and a solute-binding protein (PhnD).

It is found in the cell inner membrane. The enzyme catalyses phosphonate(out) + ATP + H2O = phosphonate(in) + ADP + phosphate + H(+). Functionally, part of the ABC transporter complex PhnCDE involved in phosphonates import. Responsible for energy coupling to the transport system. This is Phosphonates import ATP-binding protein PhnC 2 from Pseudomonas savastanoi pv. phaseolicola (strain 1448A / Race 6) (Pseudomonas syringae pv. phaseolicola (strain 1448A / Race 6)).